Reading from the N-terminus, the 365-residue chain is Chorismate synthase (365 aa).

Positions 41–51 (IQKELDRRRPG) are enriched in basic and acidic residues. Residues 41-62 (IQKELDRRRPGQSEVSTPRSEA) form a disordered region. Residue Arg48 coordinates NADP(+). Residues 125–127 (RSS), Gly285, 300–304 (KPTPS), and Arg327 contribute to the FMN site.

This sequence belongs to the chorismate synthase family. The cofactor is FMNH2.

The enzyme catalyses 5-O-(1-carboxyvinyl)-3-phosphoshikimate = chorismate + phosphate. The protein operates within metabolic intermediate biosynthesis; chorismate biosynthesis; chorismate from D-erythrose 4-phosphate and phosphoenolpyruvate: step 7/7. Catalyzes the anti-1,4-elimination of the C-3 phosphate and the C-6 proR hydrogen from 5-enolpyruvylshikimate-3-phosphate (EPSP) to yield chorismate, which is the branch point compound that serves as the starting substrate for the three terminal pathways of aromatic amino acid biosynthesis. This reaction introduces a second double bond into the aromatic ring system. This chain is Chorismate synthase, found in Methanosarcina mazei (strain ATCC BAA-159 / DSM 3647 / Goe1 / Go1 / JCM 11833 / OCM 88) (Methanosarcina frisia).